Here is a 495-residue protein sequence, read N- to C-terminus: NADH-ubiquinone oxidoreductase chain 4 (495 aa).

The next 12 helical transmembrane spans lie at 9 to 29 (YFNLSGLILCPVLGSIILLFI), 39 to 59 (LIGLCASLITFLYSLVLWIQF), 89 to 109 (ISLFFVILTTFLIPICILVGW), 118 to 138 (EYIIAFLICEFLMIAVFCMLD), 173 to 193 (FFLYTLLGSLFMLLAILLILF), 214 to 234 (IFLWIAFFASFAVKVPMVPVH), 245 to 265 (PTAGSVILAGILLKFGTYGFL), 272 to 292 (FPEATLCFTPFIYTLSAIAII), 335 to 355 (ILLMLSHGLVSSALFLCVGVL), 367 to 387 (YGGLVSTMPNFSTIFFFFTLA), 413 to 433 (LVATLAALGMILGAAYSLWLY), and 457 to 477 (VFIFIPFLVGVVWMGVYPKVF).

Belongs to the complex I subunit 4 family. As to quaternary structure, complex I is composed of at least 49 different subunits.

The protein resides in the mitochondrion inner membrane. The enzyme catalyses a ubiquinone + NADH + 5 H(+)(in) = a ubiquinol + NAD(+) + 4 H(+)(out). Core subunit of the mitochondrial membrane respiratory chain NADH dehydrogenase (Complex I) that is believed to belong to the minimal assembly required for catalysis. Complex I functions in the transfer of electrons from NADH to the respiratory chain. The immediate electron acceptor for the enzyme is believed to be ubiquinone. In Arabidopsis thaliana (Mouse-ear cress), this protein is NADH-ubiquinone oxidoreductase chain 4 (ND4).